The primary structure comprises 492 residues: Homoserine O-acetyltransferase (492 aa).

The 306-residue stretch at N47–L352 folds into the AB hydrolase-1 domain. The active-site Nucleophile is S152. R221 is a binding site for substrate. Catalysis depends on residues D315 and H348. D349 is a substrate binding site. CBS domains follow at residues M375–I431 and M440–I492.

This sequence belongs to the AB hydrolase superfamily. MetX family. Homodimer.

The protein resides in the cytoplasm. It catalyses the reaction L-homoserine + acetyl-CoA = O-acetyl-L-homoserine + CoA. It participates in amino-acid biosynthesis; L-methionine biosynthesis via de novo pathway; O-acetyl-L-homoserine from L-homoserine: step 1/1. In terms of biological role, transfers an acetyl group from acetyl-CoA to L-homoserine, forming acetyl-L-homoserine. This is Homoserine O-acetyltransferase from Methanococcus vannielii (strain ATCC 35089 / DSM 1224 / JCM 13029 / OCM 148 / SB).